The primary structure comprises 1145 residues: Pol polyprotein (1145 aa).

A disordered region spans residues 13–77 (SKKREARGSR…GSSRGSQPGQ (65 aa)). Positions 29–41 (FPDTTEESAQQIC) are enriched in polar residues. Over residues 45 to 59 (DSSDSKSVPRSERNK) the composition is skewed to basic and acidic residues. The segment covering 66–76 (GEGSSRGSQPG) has biased composition (polar residues). The region spanning 100–174 (LNVLLDTGAD…IPVTILGRDI (75 aa)) is the Peptidase A2 domain. The active site involves Asp-105. Residues 230–418 (EGKISEASDN…PPYSWLGYQL (189 aa)) enclose the Reverse transcriptase domain. The RNase H type-1 domain occupies 616–739 (PTSGITIYTD…ADEAAKIKEE (124 aa)). The Integrase-type zinc finger occupies 877-918 (ENIQEAQDEHENWHTSPKILARNYKIPLTVAKQITQECPHCT). His-886, His-890, Cys-914, and Cys-917 together coordinate Zn(2+). Residues 920 to 1077 (QGSGPAGCVM…TPWEVFITNQ (158 aa)) enclose the Integrase catalytic domain. The segment at residues 1095–1143 (KFCFYKIPGEHDWKGPTRVLWKGDGAVVVNDEGKGIIAVPLTRTKLLIK) is a DNA-binding region (integrase-type).

This sequence belongs to the retroviral Pol polyprotein family. In terms of processing, specific enzymatic cleavages in vivo yield mature proteins.

The enzyme catalyses Endohydrolysis of RNA in RNA/DNA hybrids. Three different cleavage modes: 1. sequence-specific internal cleavage of RNA. Human immunodeficiency virus type 1 and Moloney murine leukemia virus enzymes prefer to cleave the RNA strand one nucleotide away from the RNA-DNA junction. 2. RNA 5'-end directed cleavage 13-19 nucleotides from the RNA end. 3. DNA 3'-end directed cleavage 15-20 nucleotides away from the primer terminus.. It carries out the reaction 3'-end directed exonucleolytic cleavage of viral RNA-DNA hybrid.. It catalyses the reaction DNA(n) + a 2'-deoxyribonucleoside 5'-triphosphate = DNA(n+1) + diphosphate. During replicative cycle of retroviruses, the reverse-transcribed viral DNA is integrated into the host chromosome by the viral integrase enzyme. RNase H activity is associated with the reverse transcriptase. This is Pol polyprotein (pol) from Equus asinus (Donkey).